The following is a 434-amino-acid chain: 3-isopropylmalate dehydratase large subunit 1 (434 aa).

3 residues coordinate [4Fe-4S] cluster: cysteine 308, cysteine 368, and cysteine 371.

The protein belongs to the aconitase/IPM isomerase family. LeuC type 2 subfamily. In terms of assembly, heterodimer of LeuC and LeuD. It depends on [4Fe-4S] cluster as a cofactor.

It catalyses the reaction (2R,3S)-3-isopropylmalate = (2S)-2-isopropylmalate. Its pathway is amino-acid biosynthesis; L-leucine biosynthesis; L-leucine from 3-methyl-2-oxobutanoate: step 2/4. Its function is as follows. Catalyzes the isomerization between 2-isopropylmalate and 3-isopropylmalate, via the formation of 2-isopropylmaleate. The sequence is that of 3-isopropylmalate dehydratase large subunit 1 from Deinococcus radiodurans (strain ATCC 13939 / DSM 20539 / JCM 16871 / CCUG 27074 / LMG 4051 / NBRC 15346 / NCIMB 9279 / VKM B-1422 / R1).